The following is a 620-amino-acid chain: Proline--tRNA ligase (620 aa).

The protein belongs to the class-II aminoacyl-tRNA synthetase family. ProS type 1 subfamily. As to quaternary structure, homodimer.

It is found in the cytoplasm. The enzyme catalyses tRNA(Pro) + L-proline + ATP = L-prolyl-tRNA(Pro) + AMP + diphosphate. Its function is as follows. Catalyzes the attachment of proline to tRNA(Pro) in a two-step reaction: proline is first activated by ATP to form Pro-AMP and then transferred to the acceptor end of tRNA(Pro). As ProRS can inadvertently accommodate and process non-cognate amino acids such as alanine and cysteine, to avoid such errors it has two additional distinct editing activities against alanine. One activity is designated as 'pretransfer' editing and involves the tRNA(Pro)-independent hydrolysis of activated Ala-AMP. The other activity is designated 'posttransfer' editing and involves deacylation of mischarged Ala-tRNA(Pro). The misacylated Cys-tRNA(Pro) is not edited by ProRS. This Streptococcus thermophilus (strain CNRZ 1066) protein is Proline--tRNA ligase.